Reading from the N-terminus, the 378-residue chain is Glutamate 5-kinase (378 aa).

Residue lysine 19 participates in ATP binding. Serine 59, aspartate 146, and asparagine 158 together coordinate substrate. Threonine 178–aspartate 179 is an ATP binding site. Residues arginine 285–threonine 363 form the PUA domain.

The protein belongs to the glutamate 5-kinase family.

Its subcellular location is the cytoplasm. It carries out the reaction L-glutamate + ATP = L-glutamyl 5-phosphate + ADP. It participates in amino-acid biosynthesis; L-proline biosynthesis; L-glutamate 5-semialdehyde from L-glutamate: step 1/2. Its function is as follows. Catalyzes the transfer of a phosphate group to glutamate to form L-glutamate 5-phosphate. This chain is Glutamate 5-kinase, found in Polaromonas sp. (strain JS666 / ATCC BAA-500).